Reading from the N-terminus, the 364-residue chain is Peptidoglycan transport system permease protein YejB (364 aa).

A run of 6 helical transmembrane segments spans residues 9 to 29 (LALM…VIQF), 134 to 154 (SASL…PLGI), 171 to 191 (IIII…IVLF), 219 to 239 (IIDY…SAFA), 283 to 303 (IVIA…SLLI), and 325 to 345 (YPIV…VGLL). One can recognise an ABC transmembrane type-1 domain in the interval 131–350 (LPVSASLGFW…VVGLLSDLIY (220 aa)).

This sequence belongs to the binding-protein-dependent transport system permease family. As to quaternary structure, the complex is composed of one ATP-binding protein (YejF), two transmembrane proteins (YejB and YejE) and a solute-binding protein (YepA or YejA).

The protein resides in the cell inner membrane. Its function is as follows. Part of the ABC transporter complex YejBEF-YepA involved in the uptake of muropeptides, the breakdown products of cell wall peptidoglycan. The import of muropeptides into the cell enables peptidoglycan recycling, which is vital for cell wall integrity in this bacterium. Is also probably part of the ABC transporter complex YejABEF, which is likely involved in broad-spectrum peptide import. Responsible for the translocation of the substrate across the membrane. The sequence is that of Peptidoglycan transport system permease protein YejB from Agrobacterium fabrum (strain C58 / ATCC 33970) (Agrobacterium tumefaciens (strain C58)).